Reading from the N-terminus, the 43-residue chain is Cytochrome b559 subunit beta (43 aa).

Residues 18–34 traverse the membrane as a helical segment; the sequence is WLAIHGLAIPTVFFLGG. His-22 provides a ligand contact to heme.

Belongs to the PsbE/PsbF family. As to quaternary structure, heterodimer of an alpha subunit and a beta subunit. PSII is composed of 1 copy each of membrane proteins PsbA, PsbB, PsbC, PsbD, PsbE, PsbF, PsbH, PsbI, PsbJ, PsbK, PsbL, PsbM, PsbT, PsbX, PsbY, PsbZ, Psb30/Ycf12, at least 3 peripheral proteins of the oxygen-evolving complex and a large number of cofactors. It forms dimeric complexes. It depends on heme b as a cofactor.

It is found in the plastid. It localises to the chloroplast thylakoid membrane. This b-type cytochrome is tightly associated with the reaction center of photosystem II (PSII). PSII is a light-driven water:plastoquinone oxidoreductase that uses light energy to abstract electrons from H(2)O, generating O(2) and a proton gradient subsequently used for ATP formation. It consists of a core antenna complex that captures photons, and an electron transfer chain that converts photonic excitation into a charge separation. The chain is Cytochrome b559 subunit beta from Trieres chinensis (Marine centric diatom).